The chain runs to 333 residues: Low specificity L-threonine aldolase (333 aa).

Lys197 bears the N6-(pyridoxal phosphate)lysine mark.

It belongs to the threonine aldolase family. As to quaternary structure, homotetramer. The cofactor is pyridoxal 5'-phosphate.

It catalyses the reaction L-threonine = acetaldehyde + glycine. It carries out the reaction L-allo-threonine = acetaldehyde + glycine. Catalyzes the cleavage of L-allo-threonine and L-threonine to glycine and acetaldehyde. L-threo-phenylserine and L-erythro-phenylserine are also good substrates. The polypeptide is Low specificity L-threonine aldolase (ltaE) (Escherichia coli (strain K12)).